Consider the following 502-residue polypeptide: MFSLQEICRKNIYLLPDWLGEHVVQRLGLYWKKHGTLQRIGDDYVLIQQDLIIPINEALRMAGEEGNDEVIELLLLWEGNIYYAIIGALEGDHDSLAYKLYSQIRDCHNILPLIQDPKIFEKCHDLDESCNISCLVLNAVKHDMLCILQEYKMLLSGGDIQEVFETACRSQKYDIVTWMGQNIAIYNPGVIFDIAFDKMNVSLLSIGYTLLFEHHINNMIENNMDTNSLLMQHLEWAASTGFLHFMLETLKYGGDVTIIELSAAVKYDHRKVLDYFLRRKKLPRETLEKLLLLAICEACSKKTLNLLLSYLNYSVDNIRKKILQYVKQYETTLIIKILWKKRKINLIDPILADFVGYHSYTYLINFMREFSIYPERIIKMAARVAREDLVIKFSKKVCKDPIDRLNYLKTLVYTMRHKAGKRVLIYTIHNLYKASYLESKEMFKLARFYARHDATFQFISICHDLSKLNIDIKNLLSECLEIAIKNNYPQLIKAIKMDMNYE.

Belongs to the asfivirus MGF 505 family.

Plays a role in virus cell tropism, and may be required for efficient virus replication in macrophages. In Ornithodoros (relapsing fever ticks), this protein is Protein MGF 505-5R.